The following is a 532-amino-acid chain: NADH-quinone oxidoreductase subunit N 2 (532 aa).

14 consecutive transmembrane segments (helical) span residues 37-57 (VAPP…DLFL), 63-83 (RLLG…LIPL), 107-127 (FTLV…LLSL), 133-153 (LPAG…ALLP), 158-178 (LATL…LVGI), 192-212 (FFLS…FVYA), 241-261 (VALT…HFWV), 276-296 (LSVV…VVAF), 302-322 (VWGP…NVAA), 336-356 (LLAW…AAAA), 367-387 (VAYA…AAVV), 411-431 (LALG…IGLF), 444-464 (GLGW…YYYL), and 504-524 (TAIV…QTVL).

It belongs to the complex I subunit 2 family. As to quaternary structure, NDH-1 is composed of 14 different subunits. Subunits NuoA, H, J, K, L, M, N constitute the membrane sector of the complex.

It is found in the cell membrane. The catalysed reaction is a quinone + NADH + 5 H(+)(in) = a quinol + NAD(+) + 4 H(+)(out). In terms of biological role, NDH-1 shuttles electrons from NADH, via FMN and iron-sulfur (Fe-S) centers, to quinones in the respiratory chain. The immediate electron acceptor for the enzyme in this species is believed to be a menaquinone. Couples the redox reaction to proton translocation (for every two electrons transferred, four hydrogen ions are translocated across the cytoplasmic membrane), and thus conserves the redox energy in a proton gradient. The protein is NADH-quinone oxidoreductase subunit N 2 of Streptomyces griseus subsp. griseus (strain JCM 4626 / CBS 651.72 / NBRC 13350 / KCC S-0626 / ISP 5235).